A 150-amino-acid chain; its full sequence is Transcriptional regulator MraZ (150 aa).

2 consecutive SpoVT-AbrB domains span residues 6–52 and 80–126; these read EFFN…PYQE and AVEC…NRTK.

Belongs to the MraZ family. In terms of assembly, forms oligomers.

The protein localises to the cytoplasm. Its subcellular location is the nucleoid. The protein is Transcriptional regulator MraZ of Syntrophotalea carbinolica (strain DSM 2380 / NBRC 103641 / GraBd1) (Pelobacter carbinolicus).